The primary structure comprises 185 residues: Signal peptidase I P (185 aa).

At 1–14 (MFDKEKRKKSNIID) the chain is on the cytoplasmic side. A helical membrane pass occupies residues 15 to 34 (WIKAILIALILVFLVRTFLF). Residues 35–185 (EPYIVQGESM…FPLDRIRHAK (151 aa)) are Extracellular-facing. Residues Ser-43 and Lys-85 contribute to the active site.

It belongs to the peptidase S26 family.

Its subcellular location is the cell membrane. It catalyses the reaction Cleavage of hydrophobic, N-terminal signal or leader sequences from secreted and periplasmic proteins.. The sequence is that of Signal peptidase I P (sipP) from Bacillus subtilis subsp. natto.